The primary structure comprises 529 residues: Ribonuclease Y (529 aa).

Residues 4 to 24 (GLIYISLEVLVACLITALIMY) form a helical membrane-spanning segment. Residues 216-297 (LTSRIALPCS…NRIEEVYHRV (82 aa)) enclose the KH domain. The HD domain occupies 342 to 435 (ALQHSKEVAL…VCAADALSAG (94 aa)).

This sequence belongs to the RNase Y family.

It is found in the cell membrane. In terms of biological role, endoribonuclease that initiates mRNA decay. This Helicobacter pylori (strain J99 / ATCC 700824) (Campylobacter pylori J99) protein is Ribonuclease Y.